We begin with the raw amino-acid sequence, 389 residues long: Chalcone synthase 5 (389 aa).

C164 is a catalytic residue.

The protein belongs to the thiolase-like superfamily. Chalcone/stilbene synthases family.

It catalyses the reaction (E)-4-coumaroyl-CoA + 3 malonyl-CoA + 3 H(+) = 2',4,4',6'-tetrahydroxychalcone + 3 CO2 + 4 CoA. It participates in secondary metabolite biosynthesis; flavonoid biosynthesis. In terms of biological role, the primary product of this enzyme is 4,2',4',6'-tetrahydroxychalcone (also termed naringenin-chalcone or chalcone) which can under specific conditions spontaneously isomerize into naringenin. The protein is Chalcone synthase 5 (CHS5) of Trifolium subterraneum (Subterranean clover).